The following is a 552-amino-acid chain: Dihydroxy-acid dehydratase (552 aa).

Cysteine 46 contacts [2Fe-2S] cluster. Residue aspartate 78 coordinates Mg(2+). Residue cysteine 119 participates in [2Fe-2S] cluster binding. 2 residues coordinate Mg(2+): aspartate 120 and lysine 121. Residue lysine 121 is modified to N6-carboxylysine. Position 191 (cysteine 191) interacts with [2Fe-2S] cluster. Residue glutamate 442 coordinates Mg(2+). The active-site Proton acceptor is serine 468.

Belongs to the IlvD/Edd family. As to quaternary structure, homodimer. The cofactor is [2Fe-2S] cluster. Requires Mg(2+) as cofactor.

It catalyses the reaction (2R)-2,3-dihydroxy-3-methylbutanoate = 3-methyl-2-oxobutanoate + H2O. It carries out the reaction (2R,3R)-2,3-dihydroxy-3-methylpentanoate = (S)-3-methyl-2-oxopentanoate + H2O. It participates in amino-acid biosynthesis; L-isoleucine biosynthesis; L-isoleucine from 2-oxobutanoate: step 3/4. It functions in the pathway amino-acid biosynthesis; L-valine biosynthesis; L-valine from pyruvate: step 3/4. Functions in the biosynthesis of branched-chain amino acids. Catalyzes the dehydration of (2R,3R)-2,3-dihydroxy-3-methylpentanoate (2,3-dihydroxy-3-methylvalerate) into 2-oxo-3-methylpentanoate (2-oxo-3-methylvalerate) and of (2R)-2,3-dihydroxy-3-methylbutanoate (2,3-dihydroxyisovalerate) into 2-oxo-3-methylbutanoate (2-oxoisovalerate), the penultimate precursor to L-isoleucine and L-valine, respectively. This Picrophilus torridus (strain ATCC 700027 / DSM 9790 / JCM 10055 / NBRC 100828 / KAW 2/3) protein is Dihydroxy-acid dehydratase.